The sequence spans 430 residues: Enolase (430 aa).

Residue glutamine 163 coordinates (2R)-2-phosphoglycerate. Residue glutamate 205 is the Proton donor of the active site. Mg(2+) is bound by residues aspartate 242, glutamate 287, and aspartate 314. (2R)-2-phosphoglycerate contacts are provided by lysine 339, arginine 368, serine 369, and lysine 390. Lysine 339 (proton acceptor) is an active-site residue.

The protein belongs to the enolase family. It depends on Mg(2+) as a cofactor.

It is found in the cytoplasm. The protein localises to the secreted. It localises to the cell surface. It carries out the reaction (2R)-2-phosphoglycerate = phosphoenolpyruvate + H2O. The protein operates within carbohydrate degradation; glycolysis; pyruvate from D-glyceraldehyde 3-phosphate: step 4/5. Functionally, catalyzes the reversible conversion of 2-phosphoglycerate (2-PG) into phosphoenolpyruvate (PEP). It is essential for the degradation of carbohydrates via glycolysis. This chain is Enolase, found in Exiguobacterium sibiricum (strain DSM 17290 / CCUG 55495 / CIP 109462 / JCM 13490 / 255-15).